The sequence spans 119 residues: Acidic phospholipase A2 CM-II (119 aa).

Cystine bridges form between Cys-11-Cys-71, Cys-26-Cys-118, Cys-28-Cys-44, Cys-43-Cys-99, Cys-50-Cys-92, Cys-60-Cys-85, and Cys-78-Cys-90. Residues Phe-27, Gly-29, and Gly-31 each contribute to the Ca(2+) site. Residue His-47 is part of the active site. Asp-48 is a binding site for Ca(2+). Residue Asp-93 is part of the active site.

This sequence belongs to the phospholipase A2 family. Group I subfamily. D49 sub-subfamily. It depends on Ca(2+) as a cofactor. As to expression, expressed by the venom gland.

It localises to the secreted. The enzyme catalyses a 1,2-diacyl-sn-glycero-3-phosphocholine + H2O = a 1-acyl-sn-glycero-3-phosphocholine + a fatty acid + H(+). Functionally, PLA2 catalyzes the calcium-dependent hydrolysis of the 2-acyl groups in 3-sn-phosphoglycerides. This chain is Acidic phospholipase A2 CM-II, found in Aspidelaps scutatus (Shield-nose snake).